Reading from the N-terminus, the 55-residue chain is Glycine-rich antimicrobial peptide Pg-AMP (55 aa).

The span at 18–39 (GYGGYGGGRYGGGYGSGRGQPV) shows a compositional bias: gly residues. The tract at residues 18-55 (GYGGYGGGRYGGGYGSGRGQPVGQGVERSHDDNRNQPR) is disordered. The segment covering 44 to 55 (ERSHDDNRNQPR) has biased composition (basic and acidic residues).

Monomer and homodimer. Might act by homodimer formation.

Its function is as follows. Has antibacterial activity against the Gram-negative bacteria Klebsiella sp., Proteus sp., E.coli ATCC 8739 (MIC=72 ug/ml) and K.pneumoniae (MIC=32 ug/ml). Has no activity against the Gram-negative bacterium S.typhimurium or the Gram-positive bacterium S.aureus. Does not have antifungal activity against the human and plant pathogenic fungi F.oxysporum, A.fumigatus and R.solani. In Psidium guajava (Guava), this protein is Glycine-rich antimicrobial peptide Pg-AMP.